The primary structure comprises 763 residues: MSELLSFALFLASVLIYAWKAGRNTWWFAATLTVLGLFVVLNITLFASDYFTGDGINDAVLYTLTNSLTGAGVSKYILPGIGIVLGLTAVFGALGWILRRRRHHPHHFGYSLLALLLALGSVDASPAFRQITELVKSQSRDGDPDFAAYYKEPSKTIPDPKLNLVYIYGESLERTYFDNEAFPDLTPELGALKNEGLDFSHTQQLPGTDYTIAGMVASQCGIPLFAPFEGNASASVSSFFPQNICLGDILKNSGYQNYFVQGANLRFAGKDVFLKSHGFDHLYGSEELKSVVADPHYRNDWGFYDDTVLDEAWKKFEELSRSGQRFSLFTLTVDTHHPDGFISRTCNRKKYDFDGKPNQSFSAVSCSQENIATFINKIKASPWFKDTVIVVSSDHLAMNNTAWKYLNKQDRNNLFFVIRGDKPQQKTLAVKRNTMDNGATVLDILGGDNYLGLGRSSLSGQSMSEIFLNIKEKTLAWKPDIIRLWKFPKEMKEFTIDQQKNMIAFSGSHFRLPLLLRVSDKRVEPLPESEYSAPLRFQLADFAPRDNFVWVDSCYKMAQLWAPELALSTDWCVSQGQLGGQQIVQHVDKTTWKSKTAFKDTVIDMARYKGNVDTLKIVDNDIRYKADSFIFNVAGAPEEVKQFSGISRPESWGRWSNAQLGDEVKIEYKHPLPKKFDLVITAKAYGNNASRPIPVRVGNEEQTLVLGNEVTTTTLHFDNPTDADTLVIVPPEPVSTNEGNILGHSPRKLGIGMVEIKVVEREG.

4 consecutive transmembrane segments (helical) span residues 4–19, 26–48, 76–98, and 105–127; these read LLSFALFLASVLIYAW, WWFAATLTVLGLFVVLNITLFAS, YILPGIGIVLGLTAVFGALGWIL, and PHHFGYSLLALLLALGSVDASPA.

It belongs to the OpgB family.

It is found in the cell inner membrane. The enzyme catalyses a phosphatidylglycerol + a membrane-derived-oligosaccharide D-glucose = a 1,2-diacyl-sn-glycerol + a membrane-derived-oligosaccharide 6-(glycerophospho)-D-glucose.. The protein operates within glycan metabolism; osmoregulated periplasmic glucan (OPG) biosynthesis. In terms of biological role, transfers a phosphoglycerol residue from phosphatidylglycerol to the membrane-bound nascent glucan backbones. The sequence is that of Phosphoglycerol transferase I from Shigella flexneri.